An 808-amino-acid polypeptide reads, in one-letter code: Phenylalanine--tRNA ligase beta subunit (808 aa).

One can recognise a tRNA-binding domain in the interval 40–157 (NKGATNVVVG…QSVEPGQDAL (118 aa)). A B5 domain is found at 411–486 (RSERVIALDL…RLYGYDELPS (76 aa)). Mg(2+)-binding residues include Asp-464, Asp-470, Glu-473, and Glu-474. The 94-residue stretch at 714 to 807 (PRYPAITRDM…VQKQTGAVLR (94 aa)) folds into the FDX-ACB domain.

Belongs to the phenylalanyl-tRNA synthetase beta subunit family. Type 1 subfamily. Tetramer of two alpha and two beta subunits. It depends on Mg(2+) as a cofactor.

It localises to the cytoplasm. It catalyses the reaction tRNA(Phe) + L-phenylalanine + ATP = L-phenylalanyl-tRNA(Phe) + AMP + diphosphate + H(+). In Shouchella clausii (strain KSM-K16) (Alkalihalobacillus clausii), this protein is Phenylalanine--tRNA ligase beta subunit.